We begin with the raw amino-acid sequence, 187 residues long: Large ribosomal subunit protein uL5 (187 aa).

It belongs to the universal ribosomal protein uL5 family. In terms of assembly, part of the 50S ribosomal subunit; part of the 5S rRNA/L5/L18/L25 subcomplex. Contacts the 5S rRNA and the P site tRNA. Forms a bridge to the 30S subunit in the 70S ribosome.

This is one of the proteins that bind and probably mediate the attachment of the 5S RNA into the large ribosomal subunit, where it forms part of the central protuberance. In the 70S ribosome it contacts protein S13 of the 30S subunit (bridge B1b), connecting the 2 subunits; this bridge is implicated in subunit movement. Contacts the P site tRNA; the 5S rRNA and some of its associated proteins might help stabilize positioning of ribosome-bound tRNAs. In Ruegeria sp. (strain TM1040) (Silicibacter sp.), this protein is Large ribosomal subunit protein uL5.